Consider the following 107-residue polypeptide: UPF0060 membrane protein A1S_1909 (107 aa).

4 consecutive transmembrane segments (helical) span residues 2–22 (FGLFIITAIAEILGCYFPYLI), 28–48 (SAWLWLPTALSLAVFVWLLTL), 56–76 (IYAAYGGIYIFTALMWLRFVD), and 85–105 (ILGGVIVLCGAGLIILQPQGL).

This sequence belongs to the UPF0060 family.

Its subcellular location is the cell inner membrane. The sequence is that of UPF0060 membrane protein A1S_1909 from Acinetobacter baumannii (strain ATCC 17978 / DSM 105126 / CIP 53.77 / LMG 1025 / NCDC KC755 / 5377).